We begin with the raw amino-acid sequence, 142 residues long: MQHARKKFRVGRTSAHNRCMLANMLKSLIHQERIETTLPKAKELRRCADKMITLAKKNTLAARRLAVARLMVRYNKLTSKEARQAKAGDLSVYNVDRKVINKLFDELGTRFVSRQGGYTRILKLQNRVGDNARKCIIEFLAN.

This sequence belongs to the bacterial ribosomal protein bL17 family. Part of the 50S ribosomal subunit. Contacts protein L32.

This chain is Large ribosomal subunit protein bL17, found in Chlamydia felis (strain Fe/C-56) (Chlamydophila felis).